The sequence spans 374 residues: DNA replication and repair protein RecF (374 aa).

An ATP-binding site is contributed by G34–T41.

It belongs to the RecF family.

It is found in the cytoplasm. Functionally, the RecF protein is involved in DNA metabolism; it is required for DNA replication and normal SOS inducibility. RecF binds preferentially to single-stranded, linear DNA. It also seems to bind ATP. The protein is DNA replication and repair protein RecF of Rhizobium etli (strain ATCC 51251 / DSM 11541 / JCM 21823 / NBRC 15573 / CFN 42).